The chain runs to 178 residues: MEQYHGTTIVSVRRGNQVALGGDGQVTLGNIVMKGTARKVRTIYDGKVLVGFAGATADAFSLLDRFEAKLQKYQGHLLRAAVDLAKDWRTDRALRHLEAMLIVADRESTLVITGNGDVLDPEGGIAAIGSGGAYAQSAAKALMENTELAPRDVVEKSLRIAGELCIYTNTNFVIETLE.

The active site involves threonine 7. 3 residues coordinate Na(+): glycine 162, cysteine 165, and threonine 168.

The protein belongs to the peptidase T1B family. HslV subfamily. As to quaternary structure, a double ring-shaped homohexamer of HslV is capped on each side by a ring-shaped HslU homohexamer. The assembly of the HslU/HslV complex is dependent on binding of ATP.

The protein localises to the cytoplasm. The enzyme catalyses ATP-dependent cleavage of peptide bonds with broad specificity.. Allosterically activated by HslU binding. Its function is as follows. Protease subunit of a proteasome-like degradation complex believed to be a general protein degrading machinery. The protein is ATP-dependent protease subunit HslV of Ralstonia nicotianae (strain ATCC BAA-1114 / GMI1000) (Ralstonia solanacearum).